The chain runs to 326 residues: Elongation factor Ts (326 aa).

Residues 80–83 form an involved in Mg(2+) ion dislocation from EF-Tu region; sequence TDFV.

The protein belongs to the EF-Ts family.

Its subcellular location is the cytoplasm. Associates with the EF-Tu.GDP complex and induces the exchange of GDP to GTP. It remains bound to the aminoacyl-tRNA.EF-Tu.GTP complex up to the GTP hydrolysis stage on the ribosome. This Rhodopirellula baltica (strain DSM 10527 / NCIMB 13988 / SH1) protein is Elongation factor Ts.